The primary structure comprises 158 residues: NAD(P)H-quinone oxidoreductase subunit J, chloroplastic (158 aa).

It belongs to the complex I 30 kDa subunit family. NDH is composed of at least 16 different subunits, 5 of which are encoded in the nucleus.

It localises to the plastid. The protein localises to the chloroplast thylakoid membrane. The enzyme catalyses a plastoquinone + NADH + (n+1) H(+)(in) = a plastoquinol + NAD(+) + n H(+)(out). It catalyses the reaction a plastoquinone + NADPH + (n+1) H(+)(in) = a plastoquinol + NADP(+) + n H(+)(out). Its function is as follows. NDH shuttles electrons from NAD(P)H:plastoquinone, via FMN and iron-sulfur (Fe-S) centers, to quinones in the photosynthetic chain and possibly in a chloroplast respiratory chain. The immediate electron acceptor for the enzyme in this species is believed to be plastoquinone. Couples the redox reaction to proton translocation, and thus conserves the redox energy in a proton gradient. The sequence is that of NAD(P)H-quinone oxidoreductase subunit J, chloroplastic from Aethionema grandiflorum (Persian stone-cress).